The following is a 219-amino-acid chain: N-(5'-phosphoribosyl)anthranilate isomerase (219 aa).

It belongs to the TrpF family.

It carries out the reaction N-(5-phospho-beta-D-ribosyl)anthranilate = 1-(2-carboxyphenylamino)-1-deoxy-D-ribulose 5-phosphate. It functions in the pathway amino-acid biosynthesis; L-tryptophan biosynthesis; L-tryptophan from chorismate: step 3/5. This is N-(5'-phosphoribosyl)anthranilate isomerase from Mesorhizobium japonicum (strain LMG 29417 / CECT 9101 / MAFF 303099) (Mesorhizobium loti (strain MAFF 303099)).